Here is a 581-residue protein sequence, read N- to C-terminus: Guanine nucleotide-binding protein-like 3 homolog (581 aa).

The span at 1–49 (MALKRLKTKKSKRLTGRLKHKIEKKVRDHNKKERRAAKKNPKKGSKKQK) shows a compositional bias: basic residues. Residues 1–50 (MALKRLKTKKSKRLTGRLKHKIEKKVRDHNKKERRAAKKNPKKGSKKQKL) form a disordered region. The stretch at 64–108 (LKEVEEAKQRQEAERLARREAFKAEREQNKFKTLESMVEDADMRS) forms a coiled coil. Ser99 is subject to Phosphoserine. The CP-type G domain occupies 141 to 325 (FKEFRKVIEN…LIDCPGIVFT (185 aa)). GTP-binding positions include 189–192 (NKAD), 274–281 (GIPNVGKS), and 318–321 (DCPG). Over residues 500–517 (KPAKGRKRKLDEEKEKVD) the composition is skewed to basic and acidic residues. Positions 500–519 (KPAKGRKRKLDEEKEKVDPS) are disordered.

It belongs to the TRAFAC class YlqF/YawG GTPase family.

The protein resides in the nucleus. It localises to the nucleolus. Its function is as follows. May play a role in regulating cellular proliferation. This Drosophila melanogaster (Fruit fly) protein is Guanine nucleotide-binding protein-like 3 homolog (Ns1).